Reading from the N-terminus, the 459-residue chain is E3 ubiquitin-protein ligase RNF14 (459 aa).

The RWD domain occupies 10 to 129; it reads DELLALASIY…QFLKEETLDF (120 aa). Residues 141–169 are disordered; the sequence is SGSQPQCEPAQKHAADASGEKSKVQDLDP. The span at 150 to 169 shows a compositional bias: basic and acidic residues; that stretch reads AQKHAADASGEKSKVQDLDP. Residues 200–441 form a TRIAD supradomain region; sequence KAFCCGICYS…NPDSPCYNQL (242 aa). Zn(2+)-binding residues include Cys-204, Cys-207, Cys-222, His-224, Cys-227, Cys-230, Cys-249, Cys-254, Cys-293, Cys-298, Cys-313, Cys-316, Cys-321, Cys-324, His-329, Cys-334, Cys-388, and Cys-391. RING-type zinc fingers lie at residues 204 to 249 and 204 to 254; these read CGIC…CLNC and CGIC…EPKC. Residues 273–334 form an IBR-type zinc finger; it reads ARYDRLLLQS…RRSYHGLSHC (62 aa). An RING-type 2; atypical zinc finger spans residues 388-417; sequence CPCCGTNIQKAHGCNKMTCSSCQKYFCWIC. Residue Cys-401 is part of the active site. Zn(2+) is bound by residues Cys-406, Cys-409, Cys-414, Cys-417, His-429, and Cys-437.

Belongs to the RBR family. RNF14 subfamily.

The protein localises to the cytoplasm. The protein resides in the nucleus. It carries out the reaction [E2 ubiquitin-conjugating enzyme]-S-ubiquitinyl-L-cysteine + [acceptor protein]-L-lysine = [E2 ubiquitin-conjugating enzyme]-L-cysteine + [acceptor protein]-N(6)-ubiquitinyl-L-lysine.. It functions in the pathway protein modification; protein ubiquitination. Its function is as follows. E3 ubiquitin-protein ligase that plays a key role in the RNF14-RNF25 translation quality control pathway, a pathway that takes place when a ribosome has stalled during translation, and which promotes ubiquitination and degradation of translation factors on stalled ribosomes. Recruited to stalled ribosomes by the ribosome collision sensor GCN1 and mediates 'Lys-6'-linked ubiquitination of target proteins, leading to their degradation. Mediates ubiquitination of eef1a1/eEF1A and etf1/eRF1 translation factors on stalled ribosomes, leading to their degradation. Specifically required to resolve RNA-protein cross-links caused by reactive aldehydes, which trigger translation stress by stalling ribosomes: acts by catalying 'Lys-6'-linked ubiquitination of RNA-protein cross-links, leading to their removal by the ATP-dependent unfoldase VCP and subsequent degradation by the proteasome. Independently of its function in the response to stalled ribosomes, acts as a regulator of transcription in Wnt signaling via its interaction with TCF transcription factors (tcf7/tcf1, tcf7l1/tcf3 and tcf7l2/tcf4). The sequence is that of E3 ubiquitin-protein ligase RNF14 from Danio rerio (Zebrafish).